The sequence spans 696 residues: DNA ligase (696 aa).

NAD(+)-binding positions include 36 to 40 (DAVYD), 85 to 86 (SL), and E124. K126 serves as the catalytic N6-AMP-lysine intermediate. Residues R147, E184, K308, and K332 each contribute to the NAD(+) site. Zn(2+) is bound by residues C426, C429, C444, and C449. Positions 618-696 (QRTVSLQGQT…EEELLKLLAS (79 aa)) constitute a BRCT domain.

This sequence belongs to the NAD-dependent DNA ligase family. LigA subfamily. The cofactor is Mg(2+). Requires Mn(2+) as cofactor.

It catalyses the reaction NAD(+) + (deoxyribonucleotide)n-3'-hydroxyl + 5'-phospho-(deoxyribonucleotide)m = (deoxyribonucleotide)n+m + AMP + beta-nicotinamide D-nucleotide.. DNA ligase that catalyzes the formation of phosphodiester linkages between 5'-phosphoryl and 3'-hydroxyl groups in double-stranded DNA using NAD as a coenzyme and as the energy source for the reaction. It is essential for DNA replication and repair of damaged DNA. In Prochlorococcus marinus (strain MIT 9303), this protein is DNA ligase.